The following is a 239-amino-acid chain: U2 small nuclear ribonucleoprotein A' (239 aa).

4 LRR repeats span residues 19–40, 42–63, 64–85, and 88–109; these read KETELDLRWYQIPIIENLGVLR, VHDAIDFTDNDIRYLGNFPRMK, RLQTLLCGNNRITAIAPDIGKV, and NLKTLSLAQNHLQEIADLDPLA. In terms of domain architecture, LRRCT spans 122-160; sequence NPVAQKQYYRLYLIWRIPSLHILDFERVRRNERLRAEEV.

This sequence belongs to the U2 small nuclear ribonucleoprotein A family. In terms of assembly, belongs to the 40S cdc5-associated complex (or cwf complex), a spliceosome sub-complex reminiscent of a late-stage spliceosome composed of the U2, U5 and U6 snRNAs and at least brr2, cdc5, cwf2/prp3, cwf3/syf1, cwf4/syf3, cwf5/ecm2, spp42/cwf6, cwf7/spf27, cwf8, cwf9, cwf10, cwf11, cwf12, prp45/cwf13, cwf14, cwf15, cwf16, cwf17, cwf18, cwf19, cwf20, cwf21, cwf22, cwf23, cwf24, cwf25, cwf26, cyp7/cwf27, cwf28, cwf29/ist3, lea1, msl1, prp5/cwf1, prp10, prp12/sap130, prp17, prp22, sap61, sap62, sap114, sap145, slu7, smb1, smd1, smd3, smf1, smg1 and syf2.

It localises to the nucleus. Involved in pre-mRNA splicing. This protein is associated with sn-RNP U2. It helps the A' protein to bind stem loop IV of U2 snRNA. The polypeptide is U2 small nuclear ribonucleoprotein A' (lea1) (Schizosaccharomyces pombe (strain 972 / ATCC 24843) (Fission yeast)).